A 142-amino-acid chain; its full sequence is MSFLTVPYKLPVSLSVGSCVIIKGTLIDSSINEPQLQVDFYTEMNEDSEIAFHLRVHLGRRVVMNSREFGIWMLEENLHYVPFEDGKPFDLRIYVCHNEYEVKVNGEYIYAFVHRIPPSYVKMIQVWRDVSLDSVLVNNGRR.

The Galectin domain occupies 6-138; sequence VPYKLPVSLS…DVSLDSVLVN (133 aa).

As to expression, predominantly and highly expressed in the placenta where it is localized mainly in the syncytiotrophoblast and in the endothelia of fetal vessels. Also detected in the amnion and chorionic trophoblasts in fetal membranes.

Binds lactose with high affinity. Strong inducer of T-cell apoptosis. This is Galectin-16 from Homo sapiens (Human).